The primary structure comprises 683 residues: Synaptic vesicle glycoprotein 2B (683 aa).

A compositionally biased stretch (basic and acidic residues) spans M1–Y10. Positions M1–G73 are disordered. Residues M1–T110 are Cytoplasmic-facing. S33 bears the Phosphoserine mark. A Phosphothreonine modification is found at T36. Residues L111 to F131 form a helical membrane-spanning segment. The Extracellular portion of the chain corresponds to A132–G148. The helical transmembrane segment at M149–A169 threads the bilayer. Topologically, residues D170 to L182 are cytoplasmic. Residues A183–F203 traverse the membrane as a helical segment. Over C204–R205 the chain is Extracellular. Residues L206–F226 form a helical membrane-spanning segment. Topologically, residues L227–S237 are cytoplasmic. The helical transmembrane segment at W238 to I258 threads the bilayer. The Extracellular segment spans residues P259–R277. The chain crosses the membrane as a helical span at residues V278–P298. At E299 to T390 the chain is on the cytoplasmic side. The helical transmembrane segment at L391–F411 threads the bilayer. Residues P412–D535 lie on the Extracellular side of the membrane. Y423 is modified (phosphotyrosine). N-linked (GlcNAc...) asparagine glycans are attached at residues N441, N491, and N516. A helical transmembrane segment spans residues F536–S556. Topologically, residues A557–R565 are cytoplasmic. A helical membrane pass occupies residues L566 to G586. The Extracellular segment spans residues N587–M592. Residues I593–I613 form a helical membrane-spanning segment. Residues T614–A626 lie on the Cytoplasmic side of the membrane. The helical transmembrane segment at F627 to V649 threads the bilayer. The Extracellular portion of the chain corresponds to G650–K653. Residues V654–L672 form a helical membrane-spanning segment. Residues R673–M683 lie on the Cytoplasmic side of the membrane.

This sequence belongs to the major facilitator superfamily. As to quaternary structure, interacts with SYT1 in a calcium-independent manner. Forms a complex with SYT1, syntaxin-1 and SNAP25. In terms of assembly, (Microbial infection) Interacts with C.botulinum neurotoxin type A (BoNT/A, botA). (Microbial infection) Interacts with C.botulinum neurotoxin type D (BoNT/D, botD). No evidence for its interaction with BoNT/D has also been published. In terms of processing, N-glycosylated. The N-terminal cytoplasmic domain is phosphorylated by CK1. In terms of tissue distribution, expressed in ribbon synapses of the retina (at protein level). Expressed in diaphragm motor nerve terminals (at protein level). Expressed in hippocampus neurons (at protein level).

The protein localises to the cytoplasmic vesicle. It localises to the secretory vesicle. The protein resides in the synaptic vesicle membrane. It is found in the acrosome. Functionally, probably plays a role in the control of regulated secretion in neural and endocrine cells. (Microbial infection) Receptor for C.botulinum neurotoxin type A (BoNT/A, botA); the toxin probably binds via extracellular loop 4. Its function is as follows. (Microbial infection) Possible receptor for C.botulinum neurotoxin type D (BoNT/D, botD). Not a receptor for C.botulinum neurotoxin type D (BoNT/D, botD). In terms of biological role, (Microbial infection) Receptor for C.botulinum neurotoxin type E (BoNT/E); the toxin probably binds via extracellular loop 4. It probably requires glycosylation of Asn-516. The polypeptide is Synaptic vesicle glycoprotein 2B (Sv2b) (Mus musculus (Mouse)).